The following is a 398-amino-acid chain: uncharacterized protein (398 aa).

The signal sequence occupies residues 1-22; it reads MKLKFYKLPLITTAFSFVFLTA. C23 carries the N-palmitoyl cysteine lipid modification. C23 is lipidated: S-diacylglycerol cysteine.

It is found in the cell membrane. This is an uncharacterized protein from Mycoplasma genitalium (strain ATCC 33530 / DSM 19775 / NCTC 10195 / G37) (Mycoplasmoides genitalium).